Consider the following 428-residue polypeptide: G2/mitotic-specific cyclin-B (428 aa).

This sequence belongs to the cyclin family. Cyclin AB subfamily. Interacts with the CDC2 protein kinase to form a serine/threonine kinase holoenzyme complex also known as maturation promoting factor (MPF). The cyclin subunit imparts substrate specificity to the complex.

In terms of biological role, essential for the control of the cell cycle at the G2/M (mitosis) transition. This chain is G2/mitotic-specific cyclin-B, found in Spisula solidissima (Atlantic surf-clam).